The chain runs to 558 residues: Eukaryotic translation initiation factor 3 subunit D (558 aa).

Residues 296-310 (EFDLLTVNETSVEPP) are RNA gate. The tract at residues 534-558 (DNTFESEGEEEDSDEEEQVKDAFQR) is disordered. A compositionally biased stretch (acidic residues) spans 537-551 (FESEGEEEDSDEEEQ).

Belongs to the eIF-3 subunit D family. Component of the eukaryotic translation initiation factor 3 (eIF-3) complex.

The protein localises to the cytoplasm. Functionally, mRNA cap-binding component of the eukaryotic translation initiation factor 3 (eIF-3) complex, which is involved in protein synthesis of a specialized repertoire of mRNAs and, together with other initiation factors, stimulates binding of mRNA and methionyl-tRNAi to the 40S ribosome. The eIF-3 complex specifically targets and initiates translation of a subset of mRNAs involved in cell proliferation. In the eIF-3 complex, eif3d specifically recognizes and binds the 7-methylguanosine cap of a subset of mRNAs. The sequence is that of Eukaryotic translation initiation factor 3 subunit D from Nasonia vitripennis (Parasitic wasp).